A 474-amino-acid chain; its full sequence is Probable glycine dehydrogenase (decarboxylating) subunit 2 (474 aa).

Lys-266 bears the N6-(pyridoxal phosphate)lysine mark.

This sequence belongs to the GcvP family. C-terminal subunit subfamily. The glycine cleavage system is composed of four proteins: P, T, L and H. In this organism, the P 'protein' is a heterodimer of two subunits. The cofactor is pyridoxal 5'-phosphate.

It catalyses the reaction N(6)-[(R)-lipoyl]-L-lysyl-[glycine-cleavage complex H protein] + glycine + H(+) = N(6)-[(R)-S(8)-aminomethyldihydrolipoyl]-L-lysyl-[glycine-cleavage complex H protein] + CO2. Functionally, the glycine cleavage system catalyzes the degradation of glycine. The P protein binds the alpha-amino group of glycine through its pyridoxal phosphate cofactor; CO(2) is released and the remaining methylamine moiety is then transferred to the lipoamide cofactor of the H protein. The polypeptide is Probable glycine dehydrogenase (decarboxylating) subunit 2 (Thermus thermophilus (strain ATCC 27634 / DSM 579 / HB8)).